The sequence spans 409 residues: Elongation factor Tu (409 aa).

Positions lysine 10–glutamate 214 constitute a tr-type G domain. The tract at residues glycine 19–threonine 26 is G1. Glycine 19–threonine 26 contributes to the GTP binding site. Threonine 26 serves as a coordination point for Mg(2+). The tract at residues glycine 60–asparagine 64 is G2. Residues aspartate 81–glycine 84 form a G3 region. GTP is bound by residues aspartate 81–histidine 85 and asparagine 136–aspartate 139. Residues asparagine 136–aspartate 139 form a G4 region. The segment at serine 174 to leucine 176 is G5.

This sequence belongs to the TRAFAC class translation factor GTPase superfamily. Classic translation factor GTPase family. EF-Tu/EF-1A subfamily. In terms of assembly, monomer.

The protein localises to the cytoplasm. It carries out the reaction GTP + H2O = GDP + phosphate + H(+). In terms of biological role, GTP hydrolase that promotes the GTP-dependent binding of aminoacyl-tRNA to the A-site of ribosomes during protein biosynthesis. In Trichodesmium erythraeum (strain IMS101), this protein is Elongation factor Tu.